The primary structure comprises 118 residues: Large ribosomal subunit protein bL19 (118 aa).

Belongs to the bacterial ribosomal protein bL19 family.

This protein is located at the 30S-50S ribosomal subunit interface and may play a role in the structure and function of the aminoacyl-tRNA binding site. The sequence is that of Large ribosomal subunit protein bL19 from Geobacter metallireducens (strain ATCC 53774 / DSM 7210 / GS-15).